The chain runs to 194 residues: Outer-membrane lipoprotein LolB (194 aa).

Residues M1–G18 form the signal peptide. A lipid anchor (N-palmitoyl cysteine) is attached at C19. C19 is lipidated: S-diacylglycerol cysteine.

It belongs to the LolB family. Monomer.

It is found in the cell outer membrane. Functionally, plays a critical role in the incorporation of lipoproteins in the outer membrane after they are released by the LolA protein. This chain is Outer-membrane lipoprotein LolB, found in Aeromonas salmonicida (strain A449).